Here is a 245-residue protein sequence, read N- to C-terminus: 1-(5-phosphoribosyl)-5-[(5-phosphoribosylamino)methylideneamino] imidazole-4-carboxamide isomerase (245 aa).

Asp7 acts as the Proton acceptor in catalysis. Asp129 (proton donor) is an active-site residue.

The protein belongs to the HisA/HisF family.

The protein localises to the cytoplasm. It carries out the reaction 1-(5-phospho-beta-D-ribosyl)-5-[(5-phospho-beta-D-ribosylamino)methylideneamino]imidazole-4-carboxamide = 5-[(5-phospho-1-deoxy-D-ribulos-1-ylimino)methylamino]-1-(5-phospho-beta-D-ribosyl)imidazole-4-carboxamide. The protein operates within amino-acid biosynthesis; L-histidine biosynthesis; L-histidine from 5-phospho-alpha-D-ribose 1-diphosphate: step 4/9. The protein is 1-(5-phosphoribosyl)-5-[(5-phosphoribosylamino)methylideneamino] imidazole-4-carboxamide isomerase of Salmonella agona (strain SL483).